The primary structure comprises 206 residues: Protein-methionine-sulfoxide reductase heme-binding subunit MsrQ (206 aa).

The next 6 helical transmembrane spans lie at 14–34, 45–65, 82–102, 118–138, 149–169, and 179–199; these read IKPLLFVAGLLPFARWFWLGA, FLTRSSGTWTLVCLLVTLAIT, MCGLFAFFYGSLHFLAWVWWD, PFITVGFAAFVLMAALAATST, WQTLHRAVYAIGLLAILHFWW, and QPLLYGSVLALLLGWRVAAWW.

This sequence belongs to the MsrQ family. As to quaternary structure, heterodimer of a catalytic subunit (MsrP) and a heme-binding subunit (MsrQ). Requires FMN as cofactor. It depends on heme b as a cofactor.

It is found in the cell inner membrane. In terms of biological role, part of the MsrPQ system that repairs oxidized periplasmic proteins containing methionine sulfoxide residues (Met-O), using respiratory chain electrons. Thus protects these proteins from oxidative-stress damage caused by reactive species of oxygen and chlorine generated by the host defense mechanisms. MsrPQ is essential for the maintenance of envelope integrity under bleach stress, rescuing a wide series of structurally unrelated periplasmic proteins from methionine oxidation. MsrQ provides electrons for reduction to the reductase catalytic subunit MsrP, using the quinone pool of the respiratory chain. This chain is Protein-methionine-sulfoxide reductase heme-binding subunit MsrQ, found in Bordetella pertussis (strain Tohama I / ATCC BAA-589 / NCTC 13251).